The primary structure comprises 545 residues: MASKEINFSDSARNKLYEGIKQLSDAVKVTMGPKGRNVLIQKSYGAPTITKDGVSVAKEIELADPIANMGAQLVKEVASKTADAAGDGTTTATVLAYSIYKEGLRNITAGANPIEVKRGMDKASAAIIEELKKSSKKIGGKSDIAQVATISANSDENIGALIAEAMEKVGKDGVITVEEAKGINDELSVVEGMQFDRGYLSAYFVTNTDKMTAQLENAYVLLTDKKISNMKEILPLLEATMQSGKPLLIIAEDIEGEALTTLVVNKLRGVLNVSAVKAPGFGDRRKAMLQDIAILTGGQVISEELGKTLEAATLADLGSAARIVIDKDNTTIVDGKGKTKDVKDRIAQIKTEIENTTSDYDREKLQERLAKLSGGVAVIKVGAASEVEMKEKKDRVDDALSATKAAVDEGIVIGGGSALIRASQKVKLKLEGDEAIGYDIIKRAIKAPLAQIATNAGYDAGVVVNEVEKNSKDGFGFNATTGEYVDMFKEGIIDPLKVTRVALQNAVSVSSLLLTTEATINEIKEDKPAPAMPDMGGMGGMGGMM.

Residues 30–33, K51, 87–91, G415, and D494 each bind ATP; these read TMGP and DGTTT.

Belongs to the chaperonin (HSP60) family. Forms a cylinder of 14 subunits composed of two heptameric rings stacked back-to-back. Interacts with the co-chaperonin GroES.

The protein resides in the cytoplasm. The catalysed reaction is ATP + H2O + a folded polypeptide = ADP + phosphate + an unfolded polypeptide.. In terms of biological role, together with its co-chaperonin GroES, plays an essential role in assisting protein folding. The GroEL-GroES system forms a nano-cage that allows encapsulation of the non-native substrate proteins and provides a physical environment optimized to promote and accelerate protein folding. This is Chaperonin GroEL from Helicobacter hepaticus (strain ATCC 51449 / 3B1).